The primary structure comprises 384 residues: tRNA-specific 2-thiouridylase MnmA (384 aa).

Residues 13-20 and Met-39 each bind ATP; that span reads GLSGGVDS. Positions 99 to 101 are interaction with target base in tRNA; it reads NPD. Cys-104 functions as the Nucleophile in the catalytic mechanism. Cys-104 and Cys-215 are disulfide-bonded. Gly-128 is an ATP binding site. Positions 165 to 167 are interaction with tRNA; the sequence is KDQ. Cys-215 acts as the Cysteine persulfide intermediate in catalysis. The tract at residues 333 to 334 is interaction with tRNA; that stretch reads RY.

The protein belongs to the MnmA/TRMU family.

It is found in the cytoplasm. The enzyme catalyses S-sulfanyl-L-cysteinyl-[protein] + uridine(34) in tRNA + AH2 + ATP = 2-thiouridine(34) in tRNA + L-cysteinyl-[protein] + A + AMP + diphosphate + H(+). Catalyzes the 2-thiolation of uridine at the wobble position (U34) of tRNA, leading to the formation of s(2)U34. This chain is tRNA-specific 2-thiouridylase MnmA, found in Albidiferax ferrireducens (strain ATCC BAA-621 / DSM 15236 / T118) (Rhodoferax ferrireducens).